Consider the following 103-residue polypeptide: ATP synthase F(0) complex subunit g, mitochondrial (103 aa).

The residue at position 2 (A2) is an N-acetylalanine. An N6-acetyllysine mark is found at K11, K24, K35, and K54.

As to quaternary structure, component of the ATP synthase complex composed at least of ATP5F1A/subunit alpha, ATP5F1B/subunit beta, ATP5MC1/subunit c (homooctomer), MT-ATP6/subunit a, MT-ATP8/subunit 8, ATP5ME/subunit e, ATP5MF/subunit f, ATP5MG/subunit g, ATP5MK/subunit k, ATP5MJ/subunit j, ATP5F1C/subunit gamma, ATP5F1D/subunit delta, ATP5F1E/subunit epsilon, ATP5PF/subunit F6, ATP5PB/subunit b, ATP5PD/subunit d, ATP5PO/subunit OSCP. ATP synthase complex consists of a soluble F(1) head domain (subunits alpha(3) and beta(3)) - the catalytic core - and a membrane F(0) domain - the membrane proton channel (subunits c, a, 8, e, f, g, k and j). These two domains are linked by a central stalk (subunits gamma, delta, and epsilon) rotating inside the F1 region and a stationary peripheral stalk (subunits F6, b, d, and OSCP).

The protein localises to the mitochondrion. Its subcellular location is the mitochondrion inner membrane. Its function is as follows. Subunit g, of the mitochondrial membrane ATP synthase complex (F(1)F(0) ATP synthase or Complex V) that produces ATP from ADP in the presence of a proton gradient across the membrane which is generated by electron transport complexes of the respiratory chain. ATP synthase complex consist of a soluble F(1) head domain - the catalytic core - and a membrane F(1) domain - the membrane proton channel. These two domains are linked by a central stalk rotating inside the F(1) region and a stationary peripheral stalk. During catalysis, ATP synthesis in the catalytic domain of F(1) is coupled via a rotary mechanism of the central stalk subunits to proton translocation. In vivo, can only synthesize ATP although its ATP hydrolase activity can be activated artificially in vitro. Part of the complex F(0) domain. This chain is ATP synthase F(0) complex subunit g, mitochondrial, found in Bos taurus (Bovine).